A 117-amino-acid polypeptide reads, in one-letter code: Peptidyl-tRNA hydrolase (117 aa).

The protein belongs to the PTH2 family.

It localises to the cytoplasm. The enzyme catalyses an N-acyl-L-alpha-aminoacyl-tRNA + H2O = an N-acyl-L-amino acid + a tRNA + H(+). Functionally, the natural substrate for this enzyme may be peptidyl-tRNAs which drop off the ribosome during protein synthesis. This is Peptidyl-tRNA hydrolase from Metallosphaera sedula (strain ATCC 51363 / DSM 5348 / JCM 9185 / NBRC 15509 / TH2).